A 906-amino-acid polypeptide reads, in one-letter code: MADENQEIGGIHFPFPFPPYPIQKDFMAELYKVLEGGKIGIFESPTGTGKSLSLICGALSWLRDFEKKKLQAEALLLAPGSGPPSSEKNSLLTSSSCQEPTDTPRPAGEPDWVTEFVQKKEERDLVERLREEQVRRRKREERLKEVCQDGRLRFAAKRTKHEEEETEALLRLSREMLDAGTGPEQLEQLECGEEHLVLAEYESDEERRGSRVDEAEDDLEEEHITKIYYCSRTHSQLAQFVREVLKSPFGKETRLVSLGSRQTLCVNEDVKNLGSVQLMNDRCVDMQRSKREKNGTGEDKPKRKRQKIQTSCPFYNHEQMELLRDEILLEVKDMEQLVALGKEARACPYYGSRFAIPAAQLVVLPYPMLLHAATRQAAGIRLQGQVVIIDEAHNLIDTITNIHSTEVNGSQLCQAHSQLLQYMERYRKRLKAKNLMYIKQILYLLEKFVAVLGGNVKQNPTTQSLSQTGSELKSINDFLFQSQVDNINLFKVQRYLEKSMLSRKLFGFTECFGVVLPSLSDSQENRGLAGFQQFLKSLQSGPTEDSPEEGQAVALRPASPLMHIEAFLAALTTANQDGRVIVNRQGSVGQSSLKFLLLNPAVHFAQVVKECRAVVIAGGTMQPMSDFREQLLACSGVEAGRVVEFSCGHVIPPDNILPLIICSGPSNQQLEFTYQRRELPQMVEETGRILCNLCNVVPGGVVCFLPSYEYLRQVHAHWDKTGLLTRLSVRKKIFQEPKRASQVEQVLMAYSKCIMSCSHSEGHLTGALLLSVVGGKMSEGINFSDDLGRCVVMVGMPYPNIKSPELQEKMAYLNQTLPRTQGQPLPGTVLIENLCMKAINQSIGRAIRHQRDFASIVLLDHRYARPSILAKLPAWIRDRVEVKATFGPAFAAVRKFHREKSHPSLV.

The region spanning glycine 9–leucine 442 is the Helicase ATP-binding domain. Position 44 to 51 (serine 44 to serine 51) interacts with ATP. The interval alanine 78 to aspartate 111 is disordered. A compositionally biased stretch (low complexity) spans serine 85 to serine 96. The residue at position 260 (serine 260) is a Phosphoserine. [4Fe-4S] cluster is bound by residues cysteine 265 and cysteine 283. Over residues valine 284–proline 301 the composition is skewed to basic and acidic residues. The segment at valine 284–threonine 310 is disordered. Residues cysteine 312 and cysteine 347 each coordinate [4Fe-4S] cluster. A DEAH box motif is present at residues aspartate 390–histidine 393.

It belongs to the DEAD box helicase family. DEAH subfamily. DDX11/CHL1 sub-subfamily. As to quaternary structure, associates with the CTF18-RFC complex. Associates with a cohesin complex composed of RAD21, SMC1 proteins and SMC3. Interacts with CHTF18. Interacts with DSCC1. Interacts with FEN1; this interaction is direct and increases flap endonuclease activity of FEN1. Interacts with PCNA. Interacts with POLR1A and UBTF. Interacts with RAD21, SMC1 proteins and SMC3. Interacts with RFC2. Interacts with TIMELESS; this interaction increases recruitment of both proteins onto chromatin in response to replication stress induction by hydroxyurea. The cofactor is [4Fe-4S] cluster.

The protein resides in the nucleus. The protein localises to the nucleolus. It is found in the cytoplasm. It localises to the cytoskeleton. Its subcellular location is the spindle pole. The protein resides in the midbody. The protein localises to the microtubule organizing center. It is found in the centrosome. The enzyme catalyses Couples ATP hydrolysis with the unwinding of duplex DNA at the replication fork by translocating in the 5'-3' direction. This creates two antiparallel DNA single strands (ssDNA). The leading ssDNA polymer is the template for DNA polymerase III holoenzyme which synthesizes a continuous strand.. It carries out the reaction ATP + H2O = ADP + phosphate + H(+). DNA-dependent ATPase and ATP-dependent DNA helicase that participates in various functions in genomic stability, including DNA replication, DNA repair and heterochromatin organization as well as in ribosomal RNA synthesis. Its double-stranded DNA helicase activity requires either a minimal 5'-single-stranded tail length of approximately 15 nt (flap substrates) or 10 nt length single-stranded gapped DNA substrates of a partial duplex DNA structure for helicase loading and translocation along DNA in a 5' to 3' direction. The helicase activity is capable of displacing duplex regions up to 100 bp, which can be extended up to 500 bp by the replication protein A (RPA) or the cohesion CTF18-replication factor C (Ctf18-RFC) complex activities. Also shows ATPase- and helicase activities on substrates that mimic key DNA intermediates of replication, repair and homologous recombination reactions, including forked duplex, anti-parallel G-quadruplex and three-stranded D-loop DNA molecules. Plays a role in DNA double-strand break (DSB) repair at the DNA replication fork during DNA replication recovery from DNA damage. Recruited with TIMELESS factor upon DNA-replication stress response at DNA replication fork to preserve replication fork progression, and hence ensure DNA replication fidelity. Also cooperates with TIMELESS factor during DNA replication to regulate proper sister chromatid cohesion and mitotic chromosome segregation. Stimulates 5'-single-stranded DNA flap endonuclease activity of FEN1 in an ATP- and helicase-independent manner; and hence it may contribute in Okazaki fragment processing at DNA replication fork during lagging strand DNA synthesis. Its ability to function at DNA replication fork is modulated by its binding to long non-coding RNA (lncRNA) cohesion regulator non-coding RNA DDX11-AS1/CONCR, which is able to increase both DDX11 ATPase activity and binding to DNA replicating regions. Also plays a role in heterochromatin organization. Involved in rRNA transcription activation through binding to active hypomethylated rDNA gene loci by recruiting UBTF and the RNA polymerase Pol I transcriptional machinery. Plays a role in embryonic development and prevention of aneuploidy. Involved in melanoma cell proliferation and survival. Associates with chromatin at DNA replication fork regions. Binds to single- and double-stranded DNAs. The polypeptide is ATP-dependent DNA helicase DDX11 (Mus musculus (Mouse)).